A 405-amino-acid polypeptide reads, in one-letter code: MHVLIAGAGLGGLTLAQNLRKRGISYEIFERDEHKDARFQGWAIALHTITDELVASMPSDMPDLRQATDHMSPLKIPTQICLYPAESNVRVGWEDCPETPFIRAERYRLRNHLATNIPIQWGKRVQRIEHDDQGVAVYFEDGTGAKGDILVGADGVKSVVRQQLLQKSHDEVLKIIPLAAIVGELKLSGEAFKRQLQLSHGSYSLIDSEKGYLTFCSLHDVAPDGKSARYYWIMSRSDPTIADPDHWLHKATQQEKLDHAREVMSNREPKFREIFDLTPVEGVKKETHIWRDLELSSLPAGRVVLMGDAAHVMTPFRGEGGYNTFIDAMALAKILDRLDKEDKTHDIESIKNSVNEYNAEMLERGVKSVQLSREWVDGSKVNSKKPLLAPMKVIPFSEVPLEVAA.

FAD-binding residues include Glu30, Ala45, Arg106, Asp308, and Gly321.

This sequence belongs to the paxM FAD-dependent monooxygenase family. Requires FAD as cofactor.

Functionally, FAD-dependent monooxygenase; part of the gene cluster that produces the tetronate natural products trihazones. Transcription analysis of thnD confirmed this gene is expressed, hence its role in the biosynthetic pathway remains cryptic. The pathway begins with the formation of trihazone A by the hybrid PKS-NRPS synthetase thnA and the trans-enoyl reductase thnE. Trihazone A is further decarboxylated by the 2-oxoglutarate-dependent dioxygenase thnC to produce trihazone D. The function of the FAD-dependent monooxygenase thnD has still to be identified. The sequence is that of FAD-dependent monooxygenase thnD from Trichoderma harzianum (Hypocrea lixii).